We begin with the raw amino-acid sequence, 578 residues long: Malonate--CoA ligase ACSF3, mitochondrial (578 aa).

Residues 1–19 constitute a mitochondrion transit peptide; sequence MRVGAFLGRSLFSCSHVRG. 205–213 serves as a coordination point for ATP; sequence TSGTTGRPK. Positions 394–413 are disordered; it reads QNPRKEGTSYTTHAQGDSTG. ATP contacts are provided by aspartate 459, arginine 473, and lysine 565.

The protein belongs to the ATP-dependent AMP-binding enzyme family.

Its subcellular location is the mitochondrion. It carries out the reaction tetracosanoate + ATP + CoA = tetracosanoyl-CoA + AMP + diphosphate. The catalysed reaction is malonate + ATP + CoA = malonyl-CoA + AMP + diphosphate. In terms of biological role, catalyzes the initial reaction in intramitochondrial fatty acid synthesis, by activating malonate and methylmalonate, but not acetate, into their respective CoA thioester. May have some preference toward very-long-chain substrates. The protein is Malonate--CoA ligase ACSF3, mitochondrial of Xenopus laevis (African clawed frog).